Reading from the N-terminus, the 273-residue chain is 4-hydroxy-tetrahydrodipicolinate reductase (273 aa).

NAD(+)-binding positions include 12-17 and E38; that span reads GAGGRM. R39 provides a ligand contact to NADP(+). NAD(+) contacts are provided by residues 102 to 104 and 126 to 129; these read GTT and AANF. H159 (proton donor/acceptor) is an active-site residue. Residue H160 coordinates (S)-2,3,4,5-tetrahydrodipicolinate. K163 serves as the catalytic Proton donor. 169-170 contacts (S)-2,3,4,5-tetrahydrodipicolinate; sequence GT.

It belongs to the DapB family. As to quaternary structure, homotetramer.

It localises to the cytoplasm. It carries out the reaction (S)-2,3,4,5-tetrahydrodipicolinate + NAD(+) + H2O = (2S,4S)-4-hydroxy-2,3,4,5-tetrahydrodipicolinate + NADH + H(+). It catalyses the reaction (S)-2,3,4,5-tetrahydrodipicolinate + NADP(+) + H2O = (2S,4S)-4-hydroxy-2,3,4,5-tetrahydrodipicolinate + NADPH + H(+). It functions in the pathway amino-acid biosynthesis; L-lysine biosynthesis via DAP pathway; (S)-tetrahydrodipicolinate from L-aspartate: step 4/4. Its function is as follows. Catalyzes the conversion of 4-hydroxy-tetrahydrodipicolinate (HTPA) to tetrahydrodipicolinate. The polypeptide is 4-hydroxy-tetrahydrodipicolinate reductase (Proteus mirabilis (strain HI4320)).